The chain runs to 310 residues: Olfactory receptor 5T7 (310 aa).

The Extracellular segment spans residues 1–23 (MENITEVTEFILMGFTDNADLEI). N-linked (GlcNAc...) asparagine glycosylation is present at Asn-3. Residues 24-44 (LSFFLFLAIYLFTLMGNLGLI) form a helical membrane-spanning segment. Over 45-52 (TLVIGDSR) the chain is Cytoplasmic. Residues 53 to 73 (LHNPMYYFLSVLSSVDACYST) form a helical membrane-spanning segment. Over 74 to 97 (VITPQMVVDFVSEKKVISFIGCAT) the chain is Extracellular. A disulfide bond links Cys-95 and Cys-187. The chain crosses the membrane as a helical span at residues 98–118 (QMFLAVTFGTTECFLLAAMAY). Over 119 to 131 (DRYVAIHNPLMYV) the chain is Cytoplasmic. A helical membrane pass occupies residues 132-152 (VSMSPRVYVPLIIASYAGGIL). Residues 153–194 (HAVIHTVATFRLSFCGSNKISHIFCDIPPLLAISCSDTHFNQ) are Extracellular-facing. A helical transmembrane segment spans residues 195-215 (LLLFYCAGFIEVVTILIVLLS). Topologically, residues 216 to 235 (YGFILSVILKTRSTEGKRKV) are cytoplasmic. A helical transmembrane segment spans residues 236–256 (FSTCGSHLMAVSTFHGTVLFM). Residues 257 to 269 (YVRPSDSYALEHD) are Extracellular-facing. Residues 270-290 (MMVSIFYSIVIPMLNPLIYSL) form a helical membrane-spanning segment. Residues 291–310 (RNKDVKEAIKKVFGKRILCG) are Cytoplasmic-facing.

It belongs to the G-protein coupled receptor 1 family.

It localises to the cell membrane. In terms of biological role, potential odorant receptor. This chain is Olfactory receptor 5T7, found in Mus musculus (Mouse).